Consider the following 138-residue polypeptide: MLWILVLFALAASASETTTGTSSNSSQSTSAGTTNTTTPSTACINASNGSDLGAPQLALLAASGWTLSGLLLIFTCCLCCFWLVRKVCSCCGNSSESESKATHAYTNAAFTSSDATLPMGTTGSYTPPQDGSFPPPPR.

An N-terminal signal peptide occupies residues 1-15 (MLWILVLFALAASAS). The disordered stretch occupies residues 17 to 37 (TTTGTSSNSSQSTSAGTTNTT). The chain crosses the membrane as a helical span at residues 64-84 (GWTLSGLLLIFTCCLCCFWLV). Polar residues predominate over residues 113–129 (SDATLPMGTTGSYTPPQ). The tract at residues 113 to 138 (SDATLPMGTTGSYTPPQDGSFPPPPR) is disordered.

The protein localises to the host membrane. The protein is Membrane glycoprotein UL139 (UL139) of Homo sapiens (Human).